The chain runs to 184 residues: Rhox homeobox family member 1 (184 aa).

The interval 26–104 (QLGAASSAEG…GPQPENMQPR (79 aa)) is disordered. The span at 88–99 (PAQAAMEGPQPE) shows a compositional bias: low complexity. Positions 103 to 162 (PRTRRTKFTLLQVEELESVFRHTQYPDVPTRRELAENLGVTEDKVRVWFKNKRARCRRHQ) form a DNA-binding region, homeobox. The Nuclear localization signal motif lies at 155 to 164 (RARCRRHQRE).

It belongs to the paired-like homeobox family. PEPP subfamily. Does not interact with itself. Ovary, testis and epididymis. Also detected in the prostate and the mammary gland. Expressed in many tumor cell lines derived from acute lymphocytic leukemia, prostate, endometrial adenocarcinoma, melanoma, bladder carcinoma, colon carcinoma, erythroleukemia and breast carcinoma. Not expressed in placenta. In testis, mainly expressed in germ cells, but also detected in somatic cells such as Sertoli cells, Leydig cells and peritubular cells.

It localises to the nucleus. In terms of biological role, transcription factor maybe involved in reproductive processes. Modulates expression of target genes encoding proteins involved in processes relevant to spermatogenesis. The protein is Rhox homeobox family member 1 of Homo sapiens (Human).